The following is an 88-amino-acid chain: Putative cancer susceptibility gene HEPN1 protein (88 aa).

In terms of tissue distribution, expressed in liver. Expression is either down-regulated or lost in hepatocellular carcinomas (HCC).

It is found in the cytoplasm. This chain is Putative cancer susceptibility gene HEPN1 protein (HEPN1), found in Homo sapiens (Human).